We begin with the raw amino-acid sequence, 154 residues long: Myoglobin (154 aa).

In terms of domain architecture, Globin spans 2 to 148 (GLSDGEWQLV…FRNDMAAKYK (147 aa)). At serine 4 the chain carries Phosphoserine. A nitrite-binding site is contributed by histidine 65. O2 is bound at residue histidine 65. Residue threonine 68 is modified to Phosphothreonine. Position 94 (histidine 94) interacts with heme b.

It belongs to the globin family. As to quaternary structure, monomeric.

The protein localises to the cytoplasm. The protein resides in the sarcoplasm. The catalysed reaction is Fe(III)-heme b-[protein] + nitric oxide + H2O = Fe(II)-heme b-[protein] + nitrite + 2 H(+). The enzyme catalyses H2O2 + AH2 = A + 2 H2O. Monomeric heme protein which primary function is to store oxygen and facilitate its diffusion within muscle tissues. Reversibly binds oxygen through a pentacoordinated heme iron and enables its timely and efficient release as needed during periods of heightened demand. Depending on the oxidative conditions of tissues and cells, and in addition to its ability to bind oxygen, it also has a nitrite reductase activity whereby it regulates the production of bioactive nitric oxide. Under stress conditions, like hypoxia and anoxia, it also protects cells against reactive oxygen species thanks to its pseudoperoxidase activity. This chain is Myoglobin (MB), found in Macaca fascicularis (Crab-eating macaque).